Here is a 2799-residue protein sequence, read N- to C-terminus: Peramine synthetase ppzA (2799 aa).

An adenylation 1 region spans residues Gln270–Ile666. In terms of domain architecture, Carrier 1 spans Gln799–Glu875. Ser836 carries the post-translational modification O-(pantetheine 4'-phosphoryl)serine. A condensation region spans residues Asp914–Glu1327. Positions Asp1350–Thr1743 are adenylation 2. The methylation (Met) domain stretch occupies residues Leu1874 to Ile1970. One can recognise a Carrier 2 domain in the interval Ser2290–Asp2368. O-(pantetheine 4'-phosphoryl)serine is present on Ser2327. The thiesterase (TE) domain stretch occupies residues Thr2420–Asp2737.

It belongs to the NRP synthetase family. It depends on pantetheine 4'-phosphate as a cofactor.

It carries out the reaction (S)-1-pyrroline-5-carboxylate + L-arginine + S-adenosyl-L-methionine + 2 ATP = peramine + 2 AMP + S-adenosyl-L-homocysteine + 2 diphosphate + H2O + 2 H(+). It participates in secondary metabolite biosynthesis. Functionally, nonribosomal peptide synthetase; part of the gene cluster that mediates the biosynthesis of pyrrolopyrazines, secondary metabolites showing insecticidal activity. The single multifunctional NRPS ppzA is responsible for the biosynthesis of peramine. The condensation domain of ppzA is proposed to catalyze formation of a peptide bond between 1-pyrroline-5-carboxylate and arginine. The methylation domain of ppzA would catalyze the N-methylation of the alpha-amino group of arginine. The reductase domain is proposed to be responsible for reduction of the thioester and the cyclization to form an iminium ion resulting in release from the peptide synthetase. Deprotonation of this intermediate and oxidation of the pyrroline ring would give rise to peramine. This final oxidation to give the pyrrole functionality may be spontaneous. In Epichloe species that produce only peramine, the peramine synthetase gene is not localized in a gene cluster, in contrast to Metarhizium species that contain additional pyrrolopyrazine biosynthesis genes. The 2-oxoglutarate-Fe(II) type oxidoreductase ppzC hydroxylates peramine to yield the newly identified compound 8-hydroxyperamine whereas ppzD converts L-proline into trans-4-hydroxy-L-proline, a precursor of peramine biosynthesis. The sequence is that of Peramine synthetase ppzA from Metarhizium majus (strain ARSEF 297).